The sequence spans 300 residues: Nuclear egress protein 1 (300 aa).

The CCCH-type zinc-finger motif lies at 90–217 (CLSLSGMGYY…YIVFPGKALH (128 aa)).

The protein belongs to the herpesviridae NEC1 protein family. Forms a heterohexameric complex with NEC2. Interacts with capsid vertex specific component 2/CVC2; this interaction directs the capsid to the host inner nuclear membrane to initiate budding. Phosphorylated at serine residues in the N-terminus. This phosphorylation regulates the localization within the inner nuclear membrane.

It localises to the host nucleus inner membrane. Its function is as follows. Plays an essential role in virion nuclear egress, the first step of virion release from infected cell. Within the host nucleus, NEC1 interacts with the newly formed capsid through the vertexes and directs it to the inner nuclear membrane by associating with NEC2. Induces the budding of the capsid at the inner nuclear membrane as well as its envelopment into the perinuclear space. There, the NEC1/NEC2 complex promotes the fusion of the enveloped capsid with the outer nuclear membrane and the subsequent release of the viral capsid into the cytoplasm where it will reach the secondary budding sites in the host Golgi or trans-Golgi network. This chain is Nuclear egress protein 1, found in Gallid herpesvirus 2 (strain Chicken/Md5/ATCC VR-987) (GaHV-2).